A 212-amino-acid polypeptide reads, in one-letter code: MRVRNRKGASELLANNPQYVISNPEECKGKWAEIFGNNNPIHIEVGSGKGRFVTGMAAQNPDINYIGIDIQMTVLSYALDRVLEAGLPNIKLLQVDGSSLTNYFAPAEIDQLYLNFSDPWPKKRHEKRRLTYKSFLDTYKEILPEKGEIHFKTDNRGLFEYSLASFSQYGMVLKQVWLDLHADGLEGNVMTEYEEKFSNKGQVIYRVEAQFQ.

S-adenosyl-L-methionine contacts are provided by Glu-44, Asp-69, Asp-96, and Asp-118. Asp-118 is an active-site residue. Residue Lys-122 participates in substrate binding. Residues 124–129 (RHEKRR) are interaction with RNA. Residues Asp-154 and 191-194 (TEYE) each bind substrate.

The protein belongs to the class I-like SAM-binding methyltransferase superfamily. TrmB family.

It catalyses the reaction guanosine(46) in tRNA + S-adenosyl-L-methionine = N(7)-methylguanosine(46) in tRNA + S-adenosyl-L-homocysteine. Its pathway is tRNA modification; N(7)-methylguanine-tRNA biosynthesis. Its function is as follows. Catalyzes the formation of N(7)-methylguanine at position 46 (m7G46) in tRNA. This Streptococcus suis (strain 05ZYH33) protein is tRNA (guanine-N(7)-)-methyltransferase.